We begin with the raw amino-acid sequence, 205 residues long: MIGRLRGTLAEKQPPHLIIDVNGVGYELEVPMTTLYRLPKVGETVTVHTHLVVREDAHLLYGFHEKRERELFRELIRLNGVGPKLALALMSGLEADELVRCVQAQDTSALVRVPGVGKKTAERLLVELKDRFKAWETSPAMFTLVSDGPVPVSGASTAEADAVSALVSLGYKPQEASKAVSAIKDKAGLSSEELIRRSLKGMITK.

Residues 1-64 (MIGRLRGTLA…EDAHLLYGFH (64 aa)) form a domain I region. A domain II region spans residues 65-143 (EKRERELFRE…AWETSPAMFT (79 aa)). Positions 144 to 153 (LVSDGPVPVS) are flexible linker. Positions 154–205 (GASTAEADAVSALVSLGYKPQEASKAVSAIKDKAGLSSEELIRRSLKGMITK) are domain III.

Belongs to the RuvA family. In terms of assembly, homotetramer. Forms an RuvA(8)-RuvB(12)-Holliday junction (HJ) complex. HJ DNA is sandwiched between 2 RuvA tetramers; dsDNA enters through RuvA and exits via RuvB. An RuvB hexamer assembles on each DNA strand where it exits the tetramer. Each RuvB hexamer is contacted by two RuvA subunits (via domain III) on 2 adjacent RuvB subunits; this complex drives branch migration. In the full resolvosome a probable DNA-RuvA(4)-RuvB(12)-RuvC(2) complex forms which resolves the HJ.

It is found in the cytoplasm. In terms of biological role, the RuvA-RuvB-RuvC complex processes Holliday junction (HJ) DNA during genetic recombination and DNA repair, while the RuvA-RuvB complex plays an important role in the rescue of blocked DNA replication forks via replication fork reversal (RFR). RuvA specifically binds to HJ cruciform DNA, conferring on it an open structure. The RuvB hexamer acts as an ATP-dependent pump, pulling dsDNA into and through the RuvAB complex. HJ branch migration allows RuvC to scan DNA until it finds its consensus sequence, where it cleaves and resolves the cruciform DNA. The polypeptide is Holliday junction branch migration complex subunit RuvA (Pseudomonas putida (strain W619)).